A 303-amino-acid chain; its full sequence is Probable cell division protein WhiA (303 aa).

Residues 272-303 constitute a DNA-binding region (H-T-H motif); it reads SIQQVADALEFPITKSGVNHRLRKINKIADDL.

The protein belongs to the WhiA family.

Involved in cell division and chromosome segregation. The sequence is that of Probable cell division protein WhiA from Streptococcus pyogenes serotype M1.